The chain runs to 262 residues: 26 kDa secreted antigen (262 aa).

The first 21 residues, 1 to 21, serve as a signal peptide directing secretion; it reads MSVVHKACLIALLFVSSGVAQ. ShKT domains are found at residues 23-57 and 59-93; these read CMDS…CNTC and CRDE…CGLC. 6 disulfide bridges follow: cysteine 23-cysteine 57, cysteine 30-cysteine 50, cysteine 37-cysteine 54, cysteine 59-cysteine 93, cysteine 66-cysteine 86, and cysteine 73-cysteine 90.

The protein belongs to the phosphatidylethanolamine-binding protein family.

It localises to the secreted. Its function is as follows. Binds phosphatidylethanolamine. The polypeptide is 26 kDa secreted antigen (TES-26) (Toxocara canis (Canine roundworm)).